Here is a 646-residue protein sequence, read N- to C-terminus: Microtubule-associated protein 9 (646 aa).

Residue serine 2 is modified to N-acetylserine. Residue tyrosine 12 is modified to Phosphotyrosine. Disordered stretches follow at residues 75–226, 242–418, 491–511, 531–554, 570–597, and 609–646; these read DFHI…QTEE, SLTS…LEPD, RLEEKNKKKTEEENAMRKGEA, RREKEYERAKKQKEEEAVAEKKKD, LKQKEKEKINERRKEELKRAEKKDKDKQ, and KERQERIERKQKKRHSFLESETHPPWSPPSRTAPSKVF. Polar residues-rich tracts occupy residues 105–119 and 157–167; these read ALDSSTPGSEGSSPD and RSTSSGETSSG. A compositionally biased stretch (basic and acidic residues) spans 188–204; that stretch reads SHTEEGVRPGVDKEHSI. Polar residues-rich tracts occupy residues 205–222, 280–291, and 330–340; these read SEASAPTPSLPRQNGTEL, LLSNENEGSSVL, and PLLSTSPSVIT. A compositionally biased stretch (basic and acidic residues) spans 346 to 357; it reads EPAKKANEDRNT. A compositionally biased stretch (polar residues) spans 386–398; that stretch reads TKRSPSAATSSHY. Residues 405 to 418 show a composition bias toward basic and acidic residues; that stretch reads LDQKQPRKQSLEPD. Residues 442 to 596 are a coiled coil; it reads MHRIKRIESE…KRAEKKDKDK (155 aa). The span at 637-646 shows a compositional bias: polar residues; the sequence is PSRTAPSKVF.

As to quaternary structure, binds to purified microtubules via its C-terminus.

It is found in the cytoplasm. It localises to the cytoskeleton. The protein resides in the spindle. Involved in organization of the bipolar mitotic spindle. Required for bipolar spindle assembly, mitosis progression and cytokinesis. May act by stabilizing interphase microtubules. This chain is Microtubule-associated protein 9 (Map9), found in Mus musculus (Mouse).